The chain runs to 234 residues: Orotidine 5'-phosphate decarboxylase (234 aa).

Residues Asp14, Lys36, 63-72, Thr123, Arg184, Gln193, Gly213, and Arg214 contribute to the substrate site; that span reads DLKFHDIPNT. Lys65 serves as the catalytic Proton donor.

The protein belongs to the OMP decarboxylase family. Type 1 subfamily. Homodimer.

It catalyses the reaction orotidine 5'-phosphate + H(+) = UMP + CO2. It functions in the pathway pyrimidine metabolism; UMP biosynthesis via de novo pathway; UMP from orotate: step 2/2. Its function is as follows. Catalyzes the decarboxylation of orotidine 5'-monophosphate (OMP) to uridine 5'-monophosphate (UMP). This Psychromonas ingrahamii (strain DSM 17664 / CCUG 51855 / 37) protein is Orotidine 5'-phosphate decarboxylase.